The chain runs to 825 residues: Taste receptor cell protein 1 (825 aa).

The N-terminal stretch at 1–21 (MDKQWFPAAGILLAALLVVSA) is a signal peptide. 2 disordered regions span residues 66–97 (EREP…GPSG) and 299–322 (TSPS…SASP). The segment covering 302 to 322 (SQASSLHSPRPSSASPLSASP) has biased composition (low complexity).

In terms of tissue distribution, expression is restricted to circumvallate papillae.

This is Taste receptor cell protein 1 (Trcg1) from Mus musculus (Mouse).